The sequence spans 118 residues: Basic phospholipase A2 1 (118 aa).

7 cysteine pairs are disulfide-bonded: Cys11/Cys72, Cys26/Cys117, Cys28/Cys44, Cys43/Cys98, Cys50/Cys91, Cys60/Cys84, and Cys78/Cys89. Ca(2+) contacts are provided by Tyr27, Gly29, and Gly31. The active site involves His47. Asp48 contributes to the Ca(2+) binding site. Asp92 is a catalytic residue.

The protein belongs to the phospholipase A2 family. Group I subfamily. D49 sub-subfamily. It depends on Ca(2+) as a cofactor. Expressed by the venom gland.

It localises to the secreted. The catalysed reaction is a 1,2-diacyl-sn-glycero-3-phosphocholine + H2O = a 1-acyl-sn-glycero-3-phosphocholine + a fatty acid + H(+). In terms of biological role, PLA2 catalyzes the calcium-dependent hydrolysis of the 2-acyl groups in 3-sn-phosphoglycerides. The chain is Basic phospholipase A2 1 from Naja melanoleuca (Forest cobra).